Consider the following 31-residue polypeptide: Cytochrome b6-f complex subunit 6 (31 aa).

Residues 4–24 (LLSYFGFLFAILTLTSVLFIG) traverse the membrane as a helical segment.

This sequence belongs to the PetL family. In terms of assembly, the 4 large subunits of the cytochrome b6-f complex are cytochrome b6, subunit IV (17 kDa polypeptide, PetD), cytochrome f and the Rieske protein, while the 4 small subunits are PetG, PetL, PetM and PetN. The complex functions as a dimer.

It localises to the plastid. Its subcellular location is the chloroplast thylakoid membrane. Component of the cytochrome b6-f complex, which mediates electron transfer between photosystem II (PSII) and photosystem I (PSI), cyclic electron flow around PSI, and state transitions. PetL is important for photoautotrophic growth as well as for electron transfer efficiency and stability of the cytochrome b6-f complex. The chain is Cytochrome b6-f complex subunit 6 from Angiopteris evecta (Mule's foot fern).